Here is a 176-residue protein sequence, read N- to C-terminus: Probable inosine/xanthosine triphosphatase (176 aa).

Position 36 (D36) interacts with Mg(2+).

The protein belongs to the YjjX NTPase family. Homodimer. It depends on Mg(2+) as a cofactor. The cofactor is Mn(2+).

It carries out the reaction XTP + H2O = XDP + phosphate + H(+). It catalyses the reaction ITP + H2O = IDP + phosphate + H(+). Functionally, phosphatase that hydrolyzes non-canonical purine nucleotides such as XTP and ITP to their respective diphosphate derivatives. Probably excludes non-canonical purines from DNA/RNA precursor pool, thus preventing their incorporation into DNA/RNA and avoiding chromosomal lesions. This is Probable inosine/xanthosine triphosphatase from Saccharolobus islandicus (strain Y.G.57.14 / Yellowstone #1) (Sulfolobus islandicus).